The primary structure comprises 359 residues: MATSSMKSIPMAIPSFSMCHKLELLKEGKTRDVPKAEEDEGLSCEFQEMLDSLPKERGWRTRYLYLFQGFWCQAKEIQAIMSFQKHFQSLENDVVLATIPKSGTTWLKALTFTILNRHRFDPVASSTNHPLFTSNPHDLVPFFEYKLYANGDVPDLSGLASPRTFATHLPFGSLKETIEKPGVKVVYLCRNPFDTFISSWHYTNNIKSESVSPVLLDQAFDLYCRGVIGFGPFWEHMLGYWRESLKRPEKVFFLRYEDLKDDIETNLKRLATFLELPFTEEEERKGVVKAIAELCSFENLKKLEVNKSNKSIKNFENRFLFRKGEVSDWVNYLSPSQVERLSALVDDKLGGSGLTFRLS.

101–106 (KSGTTW) serves as a coordination point for 3'-phosphoadenylyl sulfate. Residue His-168 is the Proton acceptor of the active site. Residues Arg-190, Ser-198, Tyr-256, and 322-324 (RKG) contribute to the 3'-phosphoadenylyl sulfate site.

Belongs to the sulfotransferase 1 family. As to expression, expressed in leaves.

Its subcellular location is the cytoplasm. The enzyme catalyses a 12-hydroxyjasmonate + 3'-phosphoadenylyl sulfate = a 12-sulfojasmonate + adenosine 3',5'-bisphosphate + H(+). Functionally, sulfotransferase that utilizes 3'-phospho-5'-adenylyl sulfate (PAPS) as sulfonate donor to specifically catalyze the sulfate conjugation of hydroxyjasmonates, with a preference for 12-hydroxyjasmonate over 11-hydroxyjasmonate. No activity with 12-hydroxyjasmonic acid methyl ester, cucurbic acid, 7-iso-cucurbic acid, 6-epi-cucurbic acid, 6-epi-7-iso-cucurbic acid and their methyl esters, prostaglandin E2, arachidonyl alcohol and 11-eicosenol. The protein is Cytosolic sulfotransferase 15 (SOT15) of Arabidopsis thaliana (Mouse-ear cress).